The following is a 301-amino-acid chain: tRNA dimethylallyltransferase (301 aa).

9 to 16 (GPTASGKS) provides a ligand contact to ATP. 11–16 (TASGKS) contacts substrate. The segment at 34-37 (DSMQ) is interaction with substrate tRNA.

The protein belongs to the IPP transferase family. Monomer. The cofactor is Mg(2+).

The enzyme catalyses adenosine(37) in tRNA + dimethylallyl diphosphate = N(6)-dimethylallyladenosine(37) in tRNA + diphosphate. In terms of biological role, catalyzes the transfer of a dimethylallyl group onto the adenine at position 37 in tRNAs that read codons beginning with uridine, leading to the formation of N6-(dimethylallyl)adenosine (i(6)A). This Corynebacterium efficiens (strain DSM 44549 / YS-314 / AJ 12310 / JCM 11189 / NBRC 100395) protein is tRNA dimethylallyltransferase.